The sequence spans 149 residues: Large ribosomal subunit protein uL13 (149 aa).

Belongs to the universal ribosomal protein uL13 family. As to quaternary structure, part of the 50S ribosomal subunit.

This protein is one of the early assembly proteins of the 50S ribosomal subunit, although it is not seen to bind rRNA by itself. It is important during the early stages of 50S assembly. This Bifidobacterium adolescentis (strain ATCC 15703 / DSM 20083 / NCTC 11814 / E194a) protein is Large ribosomal subunit protein uL13.